The primary structure comprises 597 residues: Gamma-terpinene synthase, chloroplastic (597 aa).

Residues 1–47 (MATLSMQVSILSKQVKNLNSFGMRASKLPMVARRVDVSTTRLRPICS) constitute a chloroplast transit peptide. Mn(2+) is bound by residues D350 and D354. A DDXXD motif motif is present at residues 350-354 (DDVYD). Homodimerization regions lie at residues 356-362 (YGTLDEL) and 428-465 (EAKW…FTLP). Residues D494 and E502 each coordinate Mn(2+).

Belongs to the terpene synthase family. In terms of assembly, homodimer. Requires Mn(2+) as cofactor. It depends on Mg(2+) as a cofactor.

The protein resides in the plastid. It is found in the chloroplast. The enzyme catalyses (2E)-geranyl diphosphate = gamma-terpinene + diphosphate. Its pathway is secondary metabolite biosynthesis; terpenoid biosynthesis. In terms of biological role, involved in the biosynthesis of phenolic monoterpenes natural products thymol and carvacrol which have a broad range of biological activities acting as antimicrobial compounds, insecticides, antioxidants and pharmaceutical agents. Monoterpene synthase which catalyzes the conversion of geranyl diphosphate (GPP) to gamma-terpinene and minor amounts of other monoterpenes (e.g. alpha-thujene, alpha-terpinene, myrcene, sabinene, (+)-R-limonene, alpha-pinene and alpha-phellandrene). The protein is Gamma-terpinene synthase, chloroplastic of Thymus caespititius (Cretan thyme).